Reading from the N-terminus, the 1321-residue chain is Indole-3-acetaldehyde oxidase (1321 aa).

Residues 1–90 (MSLVFAINGQ…HCNITTSEGL (90 aa)) form the 2Fe-2S ferredoxin-type domain. [2Fe-2S] cluster contacts are provided by Cys-42, Cys-47, and Cys-50. In terms of domain architecture, FAD-binding PCMH-type spans 215 to 404 (VDSGMYRWCS…LSIEIPFWHS (190 aa)).

This sequence belongs to the xanthine dehydrogenase family. As to quaternary structure, aldehyde oxidases (AO) are homodimers and heterodimers of AO subunits. AO-beta is a AAO1-AAO2 heterodimer; AO-gamma is a AAO2 homodimer. AAO2 also forms a dimer with AAO3. Requires [2Fe-2S] cluster as cofactor. It depends on FAD as a cofactor. Mo-molybdopterin serves as cofactor. In terms of tissue distribution, weakly expressed in roots, leaves and seedlings. In seedlings, mostly expressed in lower part of hypocotyls. Detectable in seeds and mature siliques at low levels.

The protein resides in the cytoplasm. The catalysed reaction is indole-3-acetaldehyde + O2 + H2O = (indol-3-yl)acetate + H2O2 + H(+). Strongly inhibited by iodoacetate, potassium cyanide (KCN), 2-mercaptoethanol, dithiothreitol (DTT), p-chloromercuribenzoate, menadione and estradiol. Weakly inhibited by 4'-(9-acridinylamino)methanesulfon-m-anisidine (mAMSA) and tritonX-100. Not affected by allopurinol. Functionally, in higher plant aldehyde oxidases (AO) appear to be homo- and heterodimeric assemblies of AO subunits with probably different physiological functions. In vitro, AO-gamma uses heptaldehyde, benzaldehyde, naphthaldehyde and cinnamaldehyde as substrates; AO-beta uses indole-3-acetaldehyde (IAAld), indole-3-aldehyde (IAld) and naphtaldehyde; the AAO2-AAO3 dimer uses abscisic aldehyde. This chain is Indole-3-acetaldehyde oxidase (AAO2), found in Arabidopsis thaliana (Mouse-ear cress).